The primary structure comprises 334 residues: Acryloyl-coenzyme A reductase (334 aa).

Cys38 serves as a coordination point for Zn(2+). Tyr39 contributes to the NADP(+) binding site. 6 residues coordinate Zn(2+): His60, Asp90, Cys93, Cys96, Cys104, and Cys146. NADP(+)-binding positions include 173 to 176 and 195 to 197; these read SGGV and TTS.

Belongs to the zinc-containing alcohol dehydrogenase family. As to quaternary structure, monomer. It depends on Zn(2+) as a cofactor.

The enzyme catalyses propanoyl-CoA + NADP(+) = acryloyl-CoA + NADPH + H(+). Its function is as follows. Plays a role in autotrophic carbon fixation via the 3-hydroxypropionate/4-hydroxybutyrate cycle. Catalyzes the acryloyl-CoA dependent NADPH oxidation and formation of propionyl-CoA. Inactive towards 3-hydroxypropionyl-CoA, NADH and crotonyl-CoA. The protein is Acryloyl-coenzyme A reductase of Sulfurisphaera tokodaii (strain DSM 16993 / JCM 10545 / NBRC 100140 / 7) (Sulfolobus tokodaii).